A 395-amino-acid polypeptide reads, in one-letter code: L-lactate dehydrogenase (395 aa).

One can recognise an FMN hydroxy acid dehydrogenase domain in the interval 1-380 (MIISAASDYR…SKDSLVQELS (380 aa)). Tyrosine 24 is a binding site for substrate. Positions 106 and 127 each coordinate FMN. Residue tyrosine 129 participates in substrate binding. Threonine 155 is an FMN binding site. Arginine 164 contributes to the substrate binding site. Lysine 251 serves as a coordination point for FMN. Histidine 275 serves as the catalytic Proton acceptor. Arginine 278 serves as a coordination point for substrate. Residue 306-330 (DSGIRNGLDVVRMIALGADSVLLGR) coordinates FMN.

Belongs to the FMN-dependent alpha-hydroxy acid dehydrogenase family. FMN is required as a cofactor.

Its subcellular location is the cell inner membrane. The catalysed reaction is (S)-lactate + A = pyruvate + AH2. Catalyzes the conversion of L-lactate to pyruvate. Is coupled to the respiratory chain. This is L-lactate dehydrogenase from Enterobacter sp. (strain 638).